A 706-amino-acid polypeptide reads, in one-letter code: MATQTNESFPLEKTRNIGIMAHIDAGKTTLTERILFYTGRLHRMGEVHEGAATMDFMEQEKERGITITSAATTCYWDDHRVNIIDTPGHVDFTVEVERSLRVLDGAIALFCAVGGVEPQSETVWRQAEKYDVPRIGFVNKMDRTGADFENVLEMMEDRLSANPVPVQYPIGAGDMFRGVIDLIEGKAIIYDDESQGMQWDVREIPDDLESKAEHWRINLLESVAEYDDELLMKYLDEDQEVEPEELHTVIRKATLNRDMTPMFCGSALKNTGVQRVLDGVTNYLPSPNDVPAITGHHPQDKEEDITRHPREDEPFSAVAFKITTDPYVGKLTFVRVYSGTLESGSRVYSPTRDEDERIGRMMFMHADSREDVDVIRAGDIAAVVGPKNLKTGDTICDPDHPVVLESMDFPEPVIRIAVEPRTKADRDKLTNGLTKLAEEDPTFNVRTDEETGQTIIAGMGELHLEIIIDRLKQEFKVEANVGQPQVAYREALTDMIDEHYVLKKQSGGRGQFAEVYMDVGPIPEEEEEESGLVFENEIKGGVIPKEFIPSVERGIESAMEDGPLAGYPIEGVWVRLYDGDHHEVDSDQNAFEIAGRLGFREAARHANPVLMEPVMEVEVVTPDDYMGDIIGDLNGRRGQIGQMGQRNDAQVINAEVPLSEMFGYSTDLRSLSQGRAIYTMQFGSYEPVPEEVASEIMDEQTMSATA.

Residues 12–288 (EKTRNIGIMA…GVTNYLPSPN (277 aa)) enclose the tr-type G domain. GTP is bound by residues 21-28 (AHIDAGKT), 85-89 (DTPGH), and 139-142 (NKMD). The segment at 288-309 (NDVPAITGHHPQDKEEDITRHP) is disordered. The segment covering 297–309 (HPQDKEEDITRHP) has biased composition (basic and acidic residues).

It belongs to the TRAFAC class translation factor GTPase superfamily. Classic translation factor GTPase family. EF-G/EF-2 subfamily.

Its subcellular location is the cytoplasm. In terms of biological role, catalyzes the GTP-dependent ribosomal translocation step during translation elongation. During this step, the ribosome changes from the pre-translocational (PRE) to the post-translocational (POST) state as the newly formed A-site-bound peptidyl-tRNA and P-site-bound deacylated tRNA move to the P and E sites, respectively. Catalyzes the coordinated movement of the two tRNA molecules, the mRNA and conformational changes in the ribosome. This chain is Elongation factor G, found in Salinibacter ruber (strain DSM 13855 / M31).